A 433-amino-acid chain; its full sequence is ATP-dependent protease ATPase subunit HslU (433 aa).

ATP is bound by residues Ile18, 60 to 65 (GVGKTE), Asp246, Glu311, and Arg383.

It belongs to the ClpX chaperone family. HslU subfamily. A double ring-shaped homohexamer of HslV is capped on each side by a ring-shaped HslU homohexamer. The assembly of the HslU/HslV complex is dependent on binding of ATP.

The protein localises to the cytoplasm. ATPase subunit of a proteasome-like degradation complex; this subunit has chaperone activity. The binding of ATP and its subsequent hydrolysis by HslU are essential for unfolding of protein substrates subsequently hydrolyzed by HslV. HslU recognizes the N-terminal part of its protein substrates and unfolds these before they are guided to HslV for hydrolysis. In Cereibacter sphaeroides (strain ATCC 17025 / ATH 2.4.3) (Rhodobacter sphaeroides), this protein is ATP-dependent protease ATPase subunit HslU.